Consider the following 312-residue polypeptide: Isoflavone reductase homolog (312 aa).

Residues 10–16, Arg-35, and Lys-44 contribute to the NADP(+) site; that span reads GGTGYVG. Catalysis depends on Lys-138, which acts as the Proton acceptor. Position 142 (Arg-142) interacts with NADP(+). Residue His-270 coordinates substrate.

This sequence belongs to the NmrA-type oxidoreductase family. Isoflavone reductase subfamily.

In Lupinus albus (White lupine), this protein is Isoflavone reductase homolog.